Reading from the N-terminus, the 1358-residue chain is DNA-directed RNA polymerase subunit beta (1358 aa).

It belongs to the RNA polymerase beta chain family. In terms of assembly, the RNAP catalytic core consists of 2 alpha, 1 beta, 1 beta' and 1 omega subunit. When a sigma factor is associated with the core the holoenzyme is formed, which can initiate transcription.

The catalysed reaction is RNA(n) + a ribonucleoside 5'-triphosphate = RNA(n+1) + diphosphate. Functionally, DNA-dependent RNA polymerase catalyzes the transcription of DNA into RNA using the four ribonucleoside triphosphates as substrates. This chain is DNA-directed RNA polymerase subunit beta, found in Francisella tularensis subsp. holarctica (strain OSU18).